The primary structure comprises 252 residues: Triosephosphate isomerase (252 aa).

10–12 (NWK) contributes to the substrate binding site. Histidine 96 (electrophile) is an active-site residue. The active-site Proton acceptor is glutamate 168. Substrate is bound by residues glycine 174, serine 214, and 235–236 (GG).

It belongs to the triosephosphate isomerase family. Homodimer.

The protein resides in the cytoplasm. It catalyses the reaction D-glyceraldehyde 3-phosphate = dihydroxyacetone phosphate. The protein operates within carbohydrate biosynthesis; gluconeogenesis. It functions in the pathway carbohydrate degradation; glycolysis; D-glyceraldehyde 3-phosphate from glycerone phosphate: step 1/1. Involved in the gluconeogenesis. Catalyzes stereospecifically the conversion of dihydroxyacetone phosphate (DHAP) to D-glyceraldehyde-3-phosphate (G3P). The protein is Triosephosphate isomerase of Lactococcus lactis subsp. lactis (strain IL1403) (Streptococcus lactis).